Here is a 741-residue protein sequence, read N- to C-terminus: NAD(P)H-quinone oxidoreductase subunit 5, chloroplastic (741 aa).

14 consecutive transmembrane segments (helical) span residues 9-29 (WIIPFVPLPVTMSIGLGLLLV), 40-60 (WAFPSVSLLSIVMVFSADLSI), 89-109 (IDPLTSIMSILITTVGIMVLI), 122-139 (LRFFAYMSFSNTSMLGLV), 147-167 (IHIFWELVGMCSYLLIGFWFT), 185-205 (GDFGLLLGILGFYWITGSLEF), 219-239 (NGVNSLFATLCAFLLFVGAVA), 258-278 (TPISALIHAATMVAAGIFLVA), 280-300 (LLPIFTVIPYIMNLISLLGII), 396-416 (TTFLLGTLSLCGIPPLACFWS), 425-445 (WLYSPIFAIIACSTAGLTAFY), 544-564 (LFPLLVLVLFTLFVGSIGIPF), 603-623 (IYSVSISYFGIFIASLLYGSV), and 719-739 (YLFVYLSYVSTFLLIYYFYFL).

It belongs to the complex I subunit 5 family. In terms of assembly, NDH is composed of at least 16 different subunits, 5 of which are encoded in the nucleus.

It localises to the plastid. The protein localises to the chloroplast thylakoid membrane. The enzyme catalyses a plastoquinone + NADH + (n+1) H(+)(in) = a plastoquinol + NAD(+) + n H(+)(out). It carries out the reaction a plastoquinone + NADPH + (n+1) H(+)(in) = a plastoquinol + NADP(+) + n H(+)(out). In terms of biological role, NDH shuttles electrons from NAD(P)H:plastoquinone, via FMN and iron-sulfur (Fe-S) centers, to quinones in the photosynthetic chain and possibly in a chloroplast respiratory chain. The immediate electron acceptor for the enzyme in this species is believed to be plastoquinone. Couples the redox reaction to proton translocation, and thus conserves the redox energy in a proton gradient. The sequence is that of NAD(P)H-quinone oxidoreductase subunit 5, chloroplastic (ndhF) from Liriodendron tulipifera (Tuliptree).